We begin with the raw amino-acid sequence, 450 residues long: UDP-N-acetylmuramoylalanine--D-glutamate ligase (450 aa).

119-125 (GSNGKTT) is a binding site for ATP.

Belongs to the MurCDEF family.

The protein resides in the cytoplasm. The enzyme catalyses UDP-N-acetyl-alpha-D-muramoyl-L-alanine + D-glutamate + ATP = UDP-N-acetyl-alpha-D-muramoyl-L-alanyl-D-glutamate + ADP + phosphate + H(+). The protein operates within cell wall biogenesis; peptidoglycan biosynthesis. In terms of biological role, cell wall formation. Catalyzes the addition of glutamate to the nucleotide precursor UDP-N-acetylmuramoyl-L-alanine (UMA). The polypeptide is UDP-N-acetylmuramoylalanine--D-glutamate ligase (Bacillus thuringiensis (strain Al Hakam)).